A 403-amino-acid chain; its full sequence is Probable tRNA sulfurtransferase (403 aa).

In terms of domain architecture, THUMP spans Gln60 to Thr165. ATP is bound by residues Met183–Leu184, His208–Phe209, Arg265, Gly287, and Gln296.

Belongs to the ThiI family.

It is found in the cytoplasm. The catalysed reaction is [ThiI sulfur-carrier protein]-S-sulfanyl-L-cysteine + a uridine in tRNA + 2 reduced [2Fe-2S]-[ferredoxin] + ATP + H(+) = [ThiI sulfur-carrier protein]-L-cysteine + a 4-thiouridine in tRNA + 2 oxidized [2Fe-2S]-[ferredoxin] + AMP + diphosphate. It carries out the reaction [ThiS sulfur-carrier protein]-C-terminal Gly-Gly-AMP + S-sulfanyl-L-cysteinyl-[cysteine desulfurase] + AH2 = [ThiS sulfur-carrier protein]-C-terminal-Gly-aminoethanethioate + L-cysteinyl-[cysteine desulfurase] + A + AMP + 2 H(+). The protein operates within cofactor biosynthesis; thiamine diphosphate biosynthesis. Functionally, catalyzes the ATP-dependent transfer of a sulfur to tRNA to produce 4-thiouridine in position 8 of tRNAs, which functions as a near-UV photosensor. Also catalyzes the transfer of sulfur to the sulfur carrier protein ThiS, forming ThiS-thiocarboxylate. This is a step in the synthesis of thiazole, in the thiamine biosynthesis pathway. The sulfur is donated as persulfide by IscS. The protein is Probable tRNA sulfurtransferase of Listeria monocytogenes serotype 4b (strain CLIP80459).